We begin with the raw amino-acid sequence, 397 residues long: Phosphoglycerate kinase (397 aa).

Residues 22–24 (DLN), Arg37, 60–63 (HFGR), Arg119, and Arg152 each bind substrate. Residues Lys202, Glu324, and 354 to 357 (GGDT) each bind ATP.

This sequence belongs to the phosphoglycerate kinase family. In terms of assembly, monomer.

It localises to the cytoplasm. The catalysed reaction is (2R)-3-phosphoglycerate + ATP = (2R)-3-phospho-glyceroyl phosphate + ADP. It participates in carbohydrate degradation; glycolysis; pyruvate from D-glyceraldehyde 3-phosphate: step 2/5. This Zymomonas mobilis subsp. mobilis (strain ATCC 31821 / ZM4 / CP4) protein is Phosphoglycerate kinase (pgk).